The primary structure comprises 432 residues: D-amino acid dehydrogenase (432 aa).

3–17 contacts FAD; it reads VVILGSGVVGVTSAW.

Belongs to the DadA oxidoreductase family. It depends on FAD as a cofactor.

The enzyme catalyses a D-alpha-amino acid + A + H2O = a 2-oxocarboxylate + AH2 + NH4(+). It functions in the pathway amino-acid degradation; D-alanine degradation; NH(3) and pyruvate from D-alanine: step 1/1. Oxidative deamination of D-amino acids. The polypeptide is D-amino acid dehydrogenase (Escherichia fergusonii (strain ATCC 35469 / DSM 13698 / CCUG 18766 / IAM 14443 / JCM 21226 / LMG 7866 / NBRC 102419 / NCTC 12128 / CDC 0568-73)).